Consider the following 206-residue polypeptide: Protein GrpE (206 aa).

Residues 1–64 (MSKKASMHKE…KALEEAQQQA (64 aa)) form a disordered region. The span at 46 to 58 (SDAKVQELEKALE) shows a compositional bias: basic and acidic residues.

The protein belongs to the GrpE family. In terms of assembly, homodimer.

The protein resides in the cytoplasm. Participates actively in the response to hyperosmotic and heat shock by preventing the aggregation of stress-denatured proteins, in association with DnaK and GrpE. It is the nucleotide exchange factor for DnaK and may function as a thermosensor. Unfolded proteins bind initially to DnaJ; upon interaction with the DnaJ-bound protein, DnaK hydrolyzes its bound ATP, resulting in the formation of a stable complex. GrpE releases ADP from DnaK; ATP binding to DnaK triggers the release of the substrate protein, thus completing the reaction cycle. Several rounds of ATP-dependent interactions between DnaJ, DnaK and GrpE are required for fully efficient folding. In Prosthecochloris aestuarii (strain DSM 271 / SK 413), this protein is Protein GrpE.